The primary structure comprises 71 residues: Sperm-associated antigen 11A (71 aa).

The first 19 residues, 1–19, serve as a signal peptide directing secretion; the sequence is MIPRLLPFFASLLFAALLF. Intrachain disulfides connect C32/C61, C39/C54, and C44/C62.

The protein belongs to the beta-defensin family.

The protein localises to the secreted. Has antimicrobial activity against E.coli. Plays a role in the defense response in the male reproductive tract, contributing to sperm maturation, storage and protection. The polypeptide is Sperm-associated antigen 11A (Mus musculus (Mouse)).